A 195-amino-acid polypeptide reads, in one-letter code: NADH dehydrogenase [ubiquinone] iron-sulfur protein 3 (195 aa).

Belongs to the complex I 30 kDa subunit family. In terms of assembly, complex I is composed of about 45 different subunits. This is a component of the iron-sulfur (IP) fragment of the enzyme.

The protein localises to the mitochondrion inner membrane. The catalysed reaction is a ubiquinone + NADH + 5 H(+)(in) = a ubiquinol + NAD(+) + 4 H(+)(out). Functionally, core subunit of the mitochondrial membrane respiratory chain NADH dehydrogenase (Complex I) that is believed to belong to the minimal assembly required for catalysis. Complex I functions in the transfer of electrons from NADH to the respiratory chain. The immediate electron acceptor for the enzyme is believed to be ubiquinone. This chain is NADH dehydrogenase [ubiquinone] iron-sulfur protein 3 (NAD9), found in Marchantia polymorpha (Common liverwort).